Consider the following 293-residue polypeptide: 4-hydroxybenzoate octaprenyltransferase (293 aa).

The next 8 helical transmembrane spans lie at 26-48 (PIGT…GGMP), 98-118 (TEAK…DLLL), 122-142 (TFLL…MKRF), 145-165 (LPQV…YGAV), 167-187 (ESLP…TVAY), 218-238 (IIAL…WISQ), 241-261 (WGYF…CWLT), and 272-292 (AFLN…VGIY).

This sequence belongs to the UbiA prenyltransferase family. Requires Mg(2+) as cofactor.

The protein localises to the cell inner membrane. The catalysed reaction is all-trans-octaprenyl diphosphate + 4-hydroxybenzoate = 4-hydroxy-3-(all-trans-octaprenyl)benzoate + diphosphate. The protein operates within cofactor biosynthesis; ubiquinone biosynthesis. Catalyzes the prenylation of para-hydroxybenzoate (PHB) with an all-trans polyprenyl group. Mediates the second step in the final reaction sequence of ubiquinone-8 (UQ-8) biosynthesis, which is the condensation of the polyisoprenoid side chain with PHB, generating the first membrane-bound Q intermediate 3-octaprenyl-4-hydroxybenzoate. The polypeptide is 4-hydroxybenzoate octaprenyltransferase (Actinobacillus pleuropneumoniae serotype 3 (strain JL03)).